The following is a 285-amino-acid chain: TATA box-binding protein-associated factor RNA polymerase I subunit D (285 aa).

Disordered stretches follow at residues 1-49 (MAQS…RIPT) and 85-112 (KKKR…TRNI). Positions 21–39 (GNQSDDSSNSSLFKTQCVP) are enriched in polar residues. S24 bears the Phosphoserine mark. Positions 85 to 104 (KKKRKKRKKRKYKPKLRRQG) are enriched in basic residues. S134 carries the phosphoserine modification. The tract at residues 193 to 219 (HKYMDDDGPLSPIEEPSTEDEATDPQS) is disordered. S229 bears the Phosphoserine mark. 2 stretches are compositionally biased toward basic and acidic residues: residues 242 to 264 (NLEQ…KDAT) and 273 to 285 (KGGE…SEVS). The segment at 242-285 (NLEQGKIKKESAFSKKSKAKDATQRGNRRSWKGGEHACLHSEVS) is disordered.

As to quaternary structure, component of the transcription factor SL1/TIF-IB complex, composed of TBP and at least TAF1A, TAF1B, TAF1C and TAF1D. Interacts with UBTF.

It is found in the nucleus. Component of the transcription factor SL1/TIF-IB complex, which is involved in the assembly of the PIC (preinitiation complex) during RNA polymerase I-dependent transcription. The rate of PIC formation probably is primarily dependent on the rate of association of SL1/TIF-IB with the rDNA promoter. SL1/TIF-IB is involved in stabilization of nucleolar transcription factor 1/UBTF on rDNA. Formation of SL1/TIF-IB excludes the association of TBP with TFIID subunits. This Rattus norvegicus (Rat) protein is TATA box-binding protein-associated factor RNA polymerase I subunit D (Taf1d).